A 541-amino-acid chain; its full sequence is Probable malate:quinone oxidoreductase (541 aa).

The interval A520–L541 is disordered.

Belongs to the MQO family. FAD is required as a cofactor.

The enzyme catalyses (S)-malate + a quinone = a quinol + oxaloacetate. Its pathway is carbohydrate metabolism; tricarboxylic acid cycle; oxaloacetate from (S)-malate (quinone route): step 1/1. The sequence is that of Probable malate:quinone oxidoreductase from Ralstonia nicotianae (strain ATCC BAA-1114 / GMI1000) (Ralstonia solanacearum).